We begin with the raw amino-acid sequence, 265 residues long: MKVAIVHNDRVTTQVAVRHLQVLLAEKGILQDQQHPDLVISVGGDGTLISAFHKYKQQLDKVCFAGIHTGHLGFYTDWRNYDMEKLVDALASHPVEENEVGYPLLDMKVTTSCGEKRFLALNEASIKRISKTMEAEVWLGGERFENFRGDGLCVSTPTGSTAYSKSLGGAVIHPRLKTLQLTEIASINNLVFRTVGSPIVIAPDEWITIVPKISDRVVVIVDGERISLTDVQKVDYKIAAEEIRFYQYGHHHFWERVNDAFIGDR.

D45 serves as the catalytic Proton acceptor. NAD(+)-binding positions include 45–46, 122–123, R148, D150, 161–166, and A185; these read DG, NE, and TAYSKS.

The protein belongs to the NAD kinase family. Requires a divalent metal cation as cofactor.

It is found in the cytoplasm. It carries out the reaction NAD(+) + ATP = ADP + NADP(+) + H(+). Its function is as follows. Involved in the regulation of the intracellular balance of NAD and NADP, and is a key enzyme in the biosynthesis of NADP. Catalyzes specifically the phosphorylation on 2'-hydroxyl of the adenosine moiety of NAD to yield NADP. This Lactobacillus delbrueckii subsp. bulgaricus (strain ATCC 11842 / DSM 20081 / BCRC 10696 / JCM 1002 / NBRC 13953 / NCIMB 11778 / NCTC 12712 / WDCM 00102 / Lb 14) protein is NAD kinase.